We begin with the raw amino-acid sequence, 297 residues long: Heterogeneous nuclear ribonucleoprotein D-like (297 aa).

The tract at residues 1–21 (MTGFGATPDFNEGSKINASKN) is disordered. RRM domains lie at 26–108 (GKMF…KGKE) and 111–190 (KKVF…QPKE). The tract at residues 192–224 (YRQQQQKQQKGGRGAATGRGGARGRGRGQGWNQ) is disordered. Over residues 202-222 (GGRGAATGRGGARGRGRGQGW) the composition is skewed to gly residues.

It is found in the nucleus. The protein resides in the cytoplasm. Functionally, acts as a transcriptional regulator. Binds DNA and RNA. This is Heterogeneous nuclear ribonucleoprotein D-like (hnrnpdl) from Xenopus tropicalis (Western clawed frog).